Reading from the N-terminus, the 465-residue chain is ATP-sulfurylase 3, chloroplastic (465 aa).

Residues 1–49 (MASMSTVFPKPTSFISQPLTKSHKSDSVTTSISFPSNSKTRSLRTISVR) constitute a chloroplast transit peptide.

The protein belongs to the sulfate adenylyltransferase family. In terms of assembly, homotetramer.

It is found in the plastid. The protein localises to the chloroplast stroma. It catalyses the reaction sulfate + ATP + H(+) = adenosine 5'-phosphosulfate + diphosphate. It functions in the pathway sulfur metabolism; hydrogen sulfide biosynthesis; sulfite from sulfate: step 1/3. This chain is ATP-sulfurylase 3, chloroplastic (APS3), found in Arabidopsis thaliana (Mouse-ear cress).